The sequence spans 556 residues: Arginine--tRNA ligase (556 aa).

Residues 132–142 carry the 'HIGH' region motif; sequence VNPTGDLHLGH.

The protein belongs to the class-I aminoacyl-tRNA synthetase family. As to quaternary structure, monomer.

Its subcellular location is the cytoplasm. It carries out the reaction tRNA(Arg) + L-arginine + ATP = L-arginyl-tRNA(Arg) + AMP + diphosphate. The sequence is that of Arginine--tRNA ligase from Oceanobacillus iheyensis (strain DSM 14371 / CIP 107618 / JCM 11309 / KCTC 3954 / HTE831).